A 514-amino-acid chain; its full sequence is Ribonuclease Y (514 aa).

A helical transmembrane segment spans residues Val-3–Ile-23. Residues Thr-203–Leu-266 enclose the KH domain. Residues Val-330 to Ala-423 enclose the HD domain.

This sequence belongs to the RNase Y family.

The protein resides in the cell membrane. In terms of biological role, endoribonuclease that initiates mRNA decay. In Rubrobacter xylanophilus (strain DSM 9941 / JCM 11954 / NBRC 16129 / PRD-1), this protein is Ribonuclease Y.